Reading from the N-terminus, the 248-residue chain is Small ribosomal subunit protein uS2 (248 aa).

Belongs to the universal ribosomal protein uS2 family.

In Leptothrix cholodnii (strain ATCC 51168 / LMG 8142 / SP-6) (Leptothrix discophora (strain SP-6)), this protein is Small ribosomal subunit protein uS2.